Here is a 1871-residue protein sequence, read N- to C-terminus: Girdin (1871 aa).

The Calponin-homology (CH) domain occupies 12–132 (QFMTSPLVTW…KLLLLLLGCA (121 aa)). Residues 196–425 (HLKRLIDERD…EMAQKQSMDE (230 aa)) are a coiled coil. 3 positions are modified to phosphoserine: S233, S237, and S449. A coiled-coil region spans residues 458-1385 (TSSRLLKLEM…KIMDQYKFYD (928 aa)). Disordered stretches follow at residues 816-842 (ENKSLEQETSQLEKDKKQLEKENKRLR) and 1010-1035 (RQDEERMVQSSPPISGEDNKWERESQ). S1020 is subject to Phosphoserine. A compositionally biased stretch (basic and acidic residues) spans 1026-1035 (EDNKWERESQ). The residue at position 1387 (S1387) is a Phosphoserine. Residues 1390-1408 (RRRGNWITLKMRKLIKSKK) are phosphoinositide-binding. Positions 1407-1416 (KKDINRERQK) are enriched in basic and acidic residues. Disordered stretches follow at residues 1407–1459 (KKDI…LGTK) and 1559–1601 (TTSF…SNNN). S1417 bears the Phosphoserine; by PKB/AKT1 mark. Polar residues-rich tracts occupy residues 1417 to 1430 (SLTLTPTRSDSSEG), 1445 to 1459 (VGSNSLEDGQTLGTK), and 1559 to 1578 (TTSFEDISPQGVSDDSSTGS). Phosphothreonine is present on T1421. The short motif at 1672–1702 (KTGSPGSEVVTLQQFLEESNKLTSVQIKSSS) is the GBA element. T1673 bears the Phosphothreonine mark. S1675 is subject to Phosphoserine. A Phosphoserine; by PKC/PRKCQ modification is found at S1690. An SH2-like; required for interaction with growth factor receptors region spans residues 1713-1823 (SLSVSSDFLG…GTTRRTSIHD (111 aa)). Position 1717 is a phosphoserine (S1717). The interval 1736 to 1871 (SGKTPGDFYD…KSRSREQQSS (136 aa)) is disordered. Positions 1743–1763 (FYDRRTTKPEFLRPGPRKTED) are enriched in basic and acidic residues. Phosphotyrosine occurs at positions 1765 and 1799. Polar residues-rich tracts occupy residues 1787–1799 (SSLSRQSKDSNPY) and 1807–1818 (SVISTAEGTTRR). Phosphoserine is present on residues S1820 and S1837. Positions 1820 to 1830 (SIHDFLTKDSR) are enriched in basic and acidic residues. Low complexity predominate over residues 1838-1851 (PPAAADSNTTAASN). The segment covering 1854–1871 (KVQESRNSKSRSREQQSS) has biased composition (basic and acidic residues).

Belongs to the CCDC88 family. Homodimer. Interacts (via GBA motif) with guanine nucleotide-binding protein G(i) alpha subunits GNAI1, GNAI2 and GNAI3. Also interacts (via GNA motif) with guanine nucleotide-binding protein G(s) alpha subunit GNAS. Interaction with G(i) alpha subunits occurs before interaction with GNAS and is regulated by phosphorylation; phosphorylation at Ser-1675 enhances binding to G(i) alpha subunits while phosphorylation at Ser-1690 abolishes G(i) alpha subunit binding, promoting binding to GNAS. Interacts (via C-terminal SH2-like region) with growth factor receptors EGFR, INSR and KDR/VEGFR2 (via their autophosphorylated cytoplasmic tails). Forms a complex with EGFR and GNAI3 which leads to enhanced EGFR signaling and triggering of cell migration; ligand stimulation is required for recruitment of GNAI3 to the complex. Interacts (tyrosine-phosphorylated form) with phosphatidylinositol 3-kinase (PI3K) regulatory subunit PIK3R1/p85a (via SH2 domains); the interaction enables recruitment of PIK3R1 to the EGFR receptor, enhancing PI3K activity and cell migration. Interacts with serine/threonine-protein kinase PRKCQ; the interaction leads to phosphorylation of CCDC88A and inhibition of its guanine nucleotide exchange factor activity. Interacts (via C-terminus) with DISC1; the interaction is direct. Interacts with AKT proteins; the interaction is inhibited in the presence of DISC1. Interacts with AKT1/PKB (via C-terminus). The non-phosphorylated form interacts with phosphatidylinositol 4-phosphate [PI(4)P] and weakly with phosphatidylinositol 3-phosphate [PI(3)P]. Interacts with microtubules. Interacts with actin. Post-translationally, phosphorylation is induced by epidermal growth factor (EGF) in a phosphoinositide 3-kinase (PI3K)-dependent manner. Phosphorylation by AKT1/PKB is necessary for delocalization from the cell membrane and for cell migration. Phosphorylated on tyrosine residues which promotes binding to phosphatidylinositol 3-kinase (PI3K) regulatory subunit PIK3R1/p85a and enhances PI3K activity. Tyrosine-phosphorylated by both receptor and non-receptor tyrosine kinases in vitro. Tyrosine phosphorylation is required for AKT1-dependent phosphorylation of Ser-1417. Phosphorylation at Ser-1690 by PRKCQ disrupts interaction with GNAI3 and inhibits guanine nucleotide exchange factor activity. Expressed ubiquitously.

The protein localises to the cell membrane. It localises to the cytoplasm. The protein resides in the cytosol. It is found in the cytoplasmic vesicle. Its subcellular location is the cell projection. The protein localises to the lamellipodium. It localises to the cytoskeleton. The protein resides in the cilium basal body. It is found in the microtubule organizing center. Its subcellular location is the centrosome. The protein localises to the centriole. Functionally, bifunctional modulator of guanine nucleotide-binding proteins (G proteins). Acts as a non-receptor guanine nucleotide exchange factor which binds to and activates guanine nucleotide-binding protein G(i) alpha subunits. Also acts as a guanine nucleotide dissociation inhibitor for guanine nucleotide-binding protein G(s) subunit alpha GNAS. Essential for cell migration. Interacts in complex with G(i) alpha subunits with the EGFR receptor, retaining EGFR at the cell membrane following ligand stimulation and promoting EGFR signaling which triggers cell migration. Binding to Gi-alpha subunits displaces the beta and gamma subunits from the heterotrimeric G-protein complex which enhances phosphoinositide 3-kinase (PI3K)-dependent phosphorylation and kinase activity of AKT1/PKB. Phosphorylation of AKT1/PKB induces the phosphorylation of downstream effectors GSK3 and FOXO1/FKHR, and regulates DNA replication and cell proliferation. Binds in its tyrosine-phosphorylated form to the phosphatidylinositol 3-kinase (PI3K) regulatory subunit PIK3R1 which enables recruitment of PIK3R1 to the EGFR receptor, enhancing PI3K activity and cell migration. Plays a role as a key modulator of the AKT-mTOR signaling pathway, controlling the tempo of the process of newborn neuron integration during adult neurogenesis, including correct neuron positioning, dendritic development and synapse formation. Inhibition of G(s) subunit alpha GNAS leads to reduced cellular levels of cAMP and suppression of cell proliferation. Essential for the integrity of the actin cytoskeleton. Required for formation of actin stress fibers and lamellipodia. May be involved in membrane sorting in the early endosome. Plays a role in ciliogenesis and cilium morphology and positioning and this may partly be through regulation of the localization of scaffolding protein CROCC/Rootletin. The polypeptide is Girdin (CCDC88A) (Homo sapiens (Human)).